Here is a 462-residue protein sequence, read N- to C-terminus: Calcitonin gene-related peptide type 1 receptor (462 aa).

Residues 1 to 22 (MEKKFFLSFLFLLPFFMILVIA) form the signal peptide. Residues 23 to 140 (ESEEENPDDL…NTHEKVKTAL (118 aa)) lie on the Extracellular side of the membrane. Disulfide bonds link Cys-49–Cys-75, Cys-66–Cys-106, and Cys-89–Cys-128. 3 N-linked (GlcNAc...) asparagine glycosylation sites follow: Asn-67, Asn-119, and Asn-124. The helical transmembrane segment at 141-165 (NLFYLTIIGHVLSIASLLISLGIFF) threads the bilayer. Residues 166 to 176 (YFKSLSCQRIT) are Cytoplasmic-facing. A helical membrane pass occupies residues 177 to 199 (LHKNLFFSFVCNSVITIIHLTAV). The Extracellular portion of the chain corresponds to 200 to 210 (ANNQALVATNP). The chain crosses the membrane as a helical span at residues 211–239 (VSCKVSQFIHLYLMGCNYFWMLCEGIYLH). Topologically, residues 240–253 (TLVVVAVFAEKQHL) are cytoplasmic. A helical transmembrane segment spans residues 254–274 (MWYYFLGWGFPLIPACIHAVA). Over 275-290 (RRLYYNDNCWISSDTQ) the chain is Extracellular. The segment at 289–290 (TQ) is required for RAMP3 interaction. Residues 291-315 (LLYIIHGPICAALLVNLFFLLNIVR) form a helical membrane-spanning segment. Topologically, residues 316–330 (VLITKLKVTHQAESN) are cytoplasmic. The chain crosses the membrane as a helical span at residues 331-352 (LYMKAVRATLILVPLLGIEFVL). The Extracellular segment spans residues 353–367 (IPWRPEGKIAEEIYD). The chain crosses the membrane as a helical span at residues 368-388 (YIINILMHYQGLLVSTIFCFF). At 389–462 (NGEVQAILRR…VVIKPEKLYD (74 aa)) the chain is on the cytoplasmic side. 2 positions are modified to phosphoserine: Ser-421 and Ser-446.

The protein belongs to the G-protein coupled receptor 2 family. As to quaternary structure, heterodimer of CALCRL and RAMP1; the receptor complex functions as CGRP receptor. Heterodimer of CALCRL and RAMP2 or CALCRL and RAMP3; the complexes function as adrenomedullin receptor.

It is found in the cell membrane. Functionally, g protein-coupled receptor which specificity is determined by its interaction with receptor-activity-modifying proteins (RAMPs). Together with RAMP1, form the receptor complex for calcitonin-gene-related peptides CALCA/CGRP1 and CALCB/CGRP2. Together with RAMP2 or RAMP3, function as receptor complexes for adrenomedullin (ADM and ADM2). Ligand binding causes a conformation change that triggers signaling via guanine nucleotide-binding proteins (G proteins) and modulates the activity of downstream effectors. Activates cAMP-dependent pathway. In Bos taurus (Bovine), this protein is Calcitonin gene-related peptide type 1 receptor (CALCRL).